The chain runs to 83 residues: Large ribosomal subunit protein bL27 (83 aa).

Residues 1 to 25 form a disordered region; the sequence is MAHKKGQGASRNGRDSESKRLGLKV.

It belongs to the bacterial ribosomal protein bL27 family.

The sequence is that of Large ribosomal subunit protein bL27 from Chlamydia muridarum (strain MoPn / Nigg).